Consider the following 197-residue polypeptide: MINKIHGKVIEKKESSLVLMTTVFEFELLVSAFCLANFNLSDKVELFTYLYTRENELKLFGFLNSDEREIFKELIGVSGVGPRAALRVLSNIRYNEFKEAIDKEDIELVSKIKGIGKKMAGKMFLHLQGKLLINSELESTGLFRFKELEESIVSMGFDRKIVNSKIREAFNLAEFANLKDSEKEQFLFKEVLKRISN.

Residues 1 to 63 are domain I; the sequence is MINKIHGKVI…ENELKLFGFL (63 aa). A domain II region spans residues 64–139; it reads NSDEREIFKE…KLLINSELES (76 aa). A region of interest (flexible linker) is located at residue S139. Positions 140–197 are domain III; it reads TGLFRFKELEESIVSMGFDRKIVNSKIREAFNLAEFANLKDSEKEQFLFKEVLKRISN.

Belongs to the RuvA family. Homotetramer. Forms an RuvA(8)-RuvB(12)-Holliday junction (HJ) complex. HJ DNA is sandwiched between 2 RuvA tetramers; dsDNA enters through RuvA and exits via RuvB. An RuvB hexamer assembles on each DNA strand where it exits the tetramer. Each RuvB hexamer is contacted by two RuvA subunits (via domain III) on 2 adjacent RuvB subunits; this complex drives branch migration. In the full resolvosome a probable DNA-RuvA(4)-RuvB(12)-RuvC(2) complex forms which resolves the HJ.

Its subcellular location is the cytoplasm. Its function is as follows. The RuvA-RuvB-RuvC complex processes Holliday junction (HJ) DNA during genetic recombination and DNA repair, while the RuvA-RuvB complex plays an important role in the rescue of blocked DNA replication forks via replication fork reversal (RFR). RuvA specifically binds to HJ cruciform DNA, conferring on it an open structure. The RuvB hexamer acts as an ATP-dependent pump, pulling dsDNA into and through the RuvAB complex. HJ branch migration allows RuvC to scan DNA until it finds its consensus sequence, where it cleaves and resolves the cruciform DNA. The polypeptide is Holliday junction branch migration complex subunit RuvA (Borreliella burgdorferi (strain ATCC 35210 / DSM 4680 / CIP 102532 / B31) (Borrelia burgdorferi)).